Here is a 142-residue protein sequence, read N- to C-terminus: ATP synthase epsilon chain (142 aa).

This sequence belongs to the ATPase epsilon chain family. As to quaternary structure, F-type ATPases have 2 components, CF(1) - the catalytic core - and CF(0) - the membrane proton channel. CF(1) has five subunits: alpha(3), beta(3), gamma(1), delta(1), epsilon(1). CF(0) has three main subunits: a, b and c.

The protein localises to the cell inner membrane. Produces ATP from ADP in the presence of a proton gradient across the membrane. This Mannheimia succiniciproducens (strain KCTC 0769BP / MBEL55E) protein is ATP synthase epsilon chain.